The primary structure comprises 98 residues: NADH-ubiquinone oxidoreductase chain 4L (98 aa).

The next 3 membrane-spanning stretches (helical) occupy residues 2–22, 29–49, and 61–81; these read PSISTNIILAFITALLGMLIF, SLLCLEGMMLSMFILSTLTIL, and ILLLVFAACEAAVGLALLVTV.

Belongs to the complex I subunit 4L family. Core subunit of respiratory chain NADH dehydrogenase (Complex I) which is composed of 45 different subunits.

It is found in the mitochondrion inner membrane. It catalyses the reaction a ubiquinone + NADH + 5 H(+)(in) = a ubiquinol + NAD(+) + 4 H(+)(out). Functionally, core subunit of the mitochondrial membrane respiratory chain NADH dehydrogenase (Complex I) which catalyzes electron transfer from NADH through the respiratory chain, using ubiquinone as an electron acceptor. Part of the enzyme membrane arm which is embedded in the lipid bilayer and involved in proton translocation. The chain is NADH-ubiquinone oxidoreductase chain 4L (MT-ND4L) from Eulemur mongoz (Mongoose lemur).